The sequence spans 237 residues: MEKREELYRGKAKSVYKTDDADRLILLFRNDTSAFDGKRIEQLDRKGMVNNKFNAFIMQKLEAAGIPTQFDKLLADNEVLVKKLDMIPVECVVRNYAAGSLVKRLGVEEGMKLNPYTFELFLKDDAKGDPFINESHVVAFGWGTAEQLARMKELSLKVNEVLSKLFDDAGLLLVDFKLEFGVFSDGSIVLGDEFSPDGCRLWDKDTKKKMDKDRFRQGLGDVIEAYEEVANRLGVPL.

This sequence belongs to the SAICAR synthetase family.

It catalyses the reaction 5-amino-1-(5-phospho-D-ribosyl)imidazole-4-carboxylate + L-aspartate + ATP = (2S)-2-[5-amino-1-(5-phospho-beta-D-ribosyl)imidazole-4-carboxamido]succinate + ADP + phosphate + 2 H(+). It participates in purine metabolism; IMP biosynthesis via de novo pathway; 5-amino-1-(5-phospho-D-ribosyl)imidazole-4-carboxamide from 5-amino-1-(5-phospho-D-ribosyl)imidazole-4-carboxylate: step 1/2. The chain is Phosphoribosylaminoimidazole-succinocarboxamide synthase from Pseudomonas fluorescens (strain Pf0-1).